We begin with the raw amino-acid sequence, 187 residues long: Oligoribonuclease (187 aa).

In terms of domain architecture, Exonuclease spans 7-170 (LIWIDLEMTG…DDIKDSINEL (164 aa)). The active site involves Tyr-128.

The protein belongs to the oligoribonuclease family.

Its subcellular location is the cytoplasm. Its function is as follows. 3'-to-5' exoribonuclease specific for small oligoribonucleotides. This is Oligoribonuclease from Legionella pneumophila (strain Paris).